The sequence spans 357 residues: DNA replication and repair protein RecF (357 aa).

30–37 (GANGSGKT) contacts ATP.

It belongs to the RecF family.

Its subcellular location is the cytoplasm. Functionally, the RecF protein is involved in DNA metabolism; it is required for DNA replication and normal SOS inducibility. RecF binds preferentially to single-stranded, linear DNA. It also seems to bind ATP. The protein is DNA replication and repair protein RecF of Salmonella schwarzengrund (strain CVM19633).